The chain runs to 462 residues: Cysteine--tRNA ligase (462 aa).

A Zn(2+)-binding site is contributed by Cys-30. The 'HIGH' region signature appears at Met-32–His-42. Positions 214, 239, and 243 each coordinate Zn(2+). The 'KMSKS' region signature appears at Lys-271–Ser-275. Residue Lys-274 coordinates ATP.

This sequence belongs to the class-I aminoacyl-tRNA synthetase family. In terms of assembly, monomer. Zn(2+) serves as cofactor.

It is found in the cytoplasm. The enzyme catalyses tRNA(Cys) + L-cysteine + ATP = L-cysteinyl-tRNA(Cys) + AMP + diphosphate. The polypeptide is Cysteine--tRNA ligase (Cupriavidus pinatubonensis (strain JMP 134 / LMG 1197) (Cupriavidus necator (strain JMP 134))).